A 188-amino-acid polypeptide reads, in one-letter code: Glandular kallikrein-3, submandibular (188 aa).

The 185-residue stretch at 1–185 (NYHVLLGQNN…FTSWIKEVMK (185 aa)) folds into the Peptidase S1 domain. N-linked (GlcNAc...) asparagine glycosylation is found at Asn10 and Asn36. Asp47 functions as the Charge relay system in the catalytic mechanism. 3 disulfide bridges follow: Cys79–Cys146, Cys111–Cys125, and Cys136–Cys161. The active-site Charge relay system is the Ser140.

Belongs to the peptidase S1 family. Kallikrein subfamily.

It catalyses the reaction Preferential cleavage of Arg-|-Xaa bonds in small molecule substrates. Highly selective action to release kallidin (lysyl-bradykinin) from kininogen involves hydrolysis of Met-|-Xaa or Leu-|-Xaa.. In terms of biological role, glandular kallikreins cleave Met-Lys and Arg-Ser bonds in kininogen to release Lys-bradykinin. The chain is Glandular kallikrein-3, submandibular (Klk3) from Rattus norvegicus (Rat).